Here is a 329-residue protein sequence, read N- to C-terminus: DNA-directed RNA polymerase subunit alpha (329 aa).

The tract at residues 1–233 is alpha N-terminal domain (alpha-NTD); it reads MVREKVKVST…NLFIPFLHVE (233 aa). An alpha C-terminal domain (alpha-CTD) region spans residues 266 to 329; sequence TKELAFQYIF…KKILDILEKK (64 aa).

This sequence belongs to the RNA polymerase alpha chain family. In plastids the minimal PEP RNA polymerase catalytic core is composed of four subunits: alpha, beta, beta', and beta''. When a (nuclear-encoded) sigma factor is associated with the core the holoenzyme is formed, which can initiate transcription.

The protein localises to the plastid. The protein resides in the chloroplast. The enzyme catalyses RNA(n) + a ribonucleoside 5'-triphosphate = RNA(n+1) + diphosphate. In terms of biological role, DNA-dependent RNA polymerase catalyzes the transcription of DNA into RNA using the four ribonucleoside triphosphates as substrates. The chain is DNA-directed RNA polymerase subunit alpha from Arabidopsis thaliana (Mouse-ear cress).